Consider the following 325-residue polypeptide: Psp operon transcriptional activator (325 aa).

The Sigma-54 factor interaction domain occupies 15–237 (FLEVLEQVSH…ELKNVVERSV (223 aa)). ATP contacts are provided by residues 36 to 43 (GERGTGKE) and 99 to 108 (ADGGTLFLDE). Residues 302–321 (QKRAAELLGLTYHQFRALLK) constitute a DNA-binding region (H-T-H motif).

In terms of assembly, forms a complex with PspA, which is composed of around 6 PspF subunits and 6 PspA subunits.

The protein localises to the cytoplasm. ATPase activity is inhibited by interaction with PspA. Under inducing conditions, the interaction is disrupted, allowing activation of psp transcription. Its function is as follows. Transcriptional activator for the phage shock protein (psp) operon (pspABCDE) and pspG gene. This is Psp operon transcriptional activator (pspF) from Escherichia coli (strain K12).